The following is a 198-amino-acid chain: uncharacterized protein (198 aa).

The region spanning Glu-11–Arg-71 is the HTH tetR-type domain. Residues Thr-34–Trp-53 constitute a DNA-binding region (H-T-H motif).

This is an uncharacterized protein from Bacillus subtilis (strain 168).